The sequence spans 298 residues: MTSSHNNLLQNFQEYLSVEKGLSDNSIYSYGYDLNKFKNFLEKEHIDFLKVQADDIMRFLNEEKDRKISSKTIAREVVAIRQFYKFLKDEKKLDTNPTEKIETPEVMRSIPDYLTQDEIEELFASIKEDNLYELRDKCIFELLYSSGLRISEACNLRLNDMDLEGMTLTVEGKGGRQRLVPFGEKSLDILNRYLKQSRPFILKSRNCEYLFVSKKGSYINRKSVWRLLNHYIKRTSILKKVTPHTLRHSFATHLLENHADLKSVQELLGHIDIATTQIYTHMANKTLREVHKKFHPRG.

Residues 3–88 form the Core-binding (CB) domain; it reads SSHNNLLQNF…AIRQFYKFLK (86 aa). Residues 109 to 292 enclose the Tyr recombinase domain; it reads SIPDYLTQDE…ANKTLREVHK (184 aa). Residues R149, K173, H244, R247, and H270 contribute to the active site. Y279 functions as the O-(3'-phospho-DNA)-tyrosine intermediate in the catalytic mechanism.

The protein belongs to the 'phage' integrase family. XerD subfamily. Forms a cyclic heterotetrameric complex composed of two molecules of XerC and two molecules of XerD.

It localises to the cytoplasm. Site-specific tyrosine recombinase, which acts by catalyzing the cutting and rejoining of the recombining DNA molecules. The XerC-XerD complex is essential to convert dimers of the bacterial chromosome into monomers to permit their segregation at cell division. It also contributes to the segregational stability of plasmids. The chain is Tyrosine recombinase XerD from Leptospira interrogans serogroup Icterohaemorrhagiae serovar copenhageni (strain Fiocruz L1-130).